The primary structure comprises 273 residues: (5R)-carbapenem-3-carboxylate synthase (273 aa).

Fe cation contacts are provided by His101 and Asp103. Gly104 is a binding site for substrate. Residue Thr130 participates in 2-oxoglutarate binding. His251 is a binding site for Fe cation. Positions 253, 263, and 267 each coordinate 2-oxoglutarate.

This sequence belongs to the TfdA dioxygenase family. In terms of assembly, homohexamer. Dimer of trimers. Fe(2+) is required as a cofactor.

Its subcellular location is the cytoplasm. It catalyses the reaction (3S,5S)-carbapenam-3-caboxylate + 2-oxoglutarate + O2 = (5R)-carbapenem-3-carboxylate + succinate + CO2 + H2O. Inhibited by L-N-acetylproline and by D-N-acetylproline. Functionally, catalyzes the Fe(2+) and alpha-ketoglutarate-dependent conversion of (3S,5S)-carbapenam to (5R)-carbapenem, an essential step in carbapenem antibiotic biosynthesis. This Pectobacterium carotovorum subsp. carotovorum (Erwinia carotovora subsp. carotovora) protein is (5R)-carbapenem-3-carboxylate synthase (carC).